The sequence spans 446 residues: Tubulin beta-1 chain (446 aa).

Residues glutamine 11, glutamate 69, serine 138, glycine 142, threonine 143, glycine 144, asparagine 204, and asparagine 226 each coordinate GTP. Glutamate 69 lines the Mg(2+) pocket.

Belongs to the tubulin family. Dimer of alpha and beta chains. A typical microtubule is a hollow water-filled tube with an outer diameter of 25 nm and an inner diameter of 15 nM. Alpha-beta heterodimers associate head-to-tail to form protofilaments running lengthwise along the microtubule wall with the beta-tubulin subunit facing the microtubule plus end conferring a structural polarity. Microtubules usually have 13 protofilaments but different protofilament numbers can be found in some organisms and specialized cells. It depends on Mg(2+) as a cofactor.

Its subcellular location is the cytoplasm. It is found in the cytoskeleton. Functionally, tubulin is the major constituent of microtubules, a cylinder consisting of laterally associated linear protofilaments composed of alpha- and beta-tubulin heterodimers. Microtubules grow by the addition of GTP-tubulin dimers to the microtubule end, where a stabilizing cap forms. Below the cap, tubulin dimers are in GDP-bound state, owing to GTPase activity of alpha-tubulin. The polypeptide is Tubulin beta-1 chain (TUBB1) (Suillus bovinus (Jersey cow bolete)).